An 85-amino-acid polypeptide reads, in one-letter code: Small integral membrane protein 35 (85 aa).

A helical membrane pass occupies residues 7 to 27 (ISTLGMILGVGLSLLLVSILG).

The protein resides in the membrane. This Mus musculus (Mouse) protein is Small integral membrane protein 35.